The sequence spans 499 residues: 2,3-bisphosphoglycerate-independent phosphoglycerate mutase (499 aa).

2 residues coordinate Mn(2+): aspartate 10 and serine 60. Serine 60 serves as the catalytic Phosphoserine intermediate. Residues histidine 121, 151–152 (RD), arginine 182, arginine 188, 253–256 (RPDR), and lysine 326 contribute to the substrate site. Positions 391, 395, 434, 435, and 452 each coordinate Mn(2+).

The protein belongs to the BPG-independent phosphoglycerate mutase family. In terms of assembly, monomer. Mn(2+) serves as cofactor.

It catalyses the reaction (2R)-2-phosphoglycerate = (2R)-3-phosphoglycerate. The protein operates within carbohydrate degradation; glycolysis; pyruvate from D-glyceraldehyde 3-phosphate: step 3/5. In terms of biological role, catalyzes the interconversion of 2-phosphoglycerate and 3-phosphoglycerate. The protein is 2,3-bisphosphoglycerate-independent phosphoglycerate mutase of Metamycoplasma hominis (strain ATCC 23114 / DSM 25592 / NBRC 14850 / NCTC 10111 / PG21) (Mycoplasma hominis).